The primary structure comprises 170 residues: Orotate phosphoribosyltransferase (170 aa).

Residues Arg86, Lys87, Lys90, His92, and 111–119 contribute to the 5-phospho-alpha-D-ribose 1-diphosphate site; that span reads EDVTTSGGS. The orotate site is built by Thr115 and Arg143.

The protein belongs to the purine/pyrimidine phosphoribosyltransferase family. PyrE subfamily. As to quaternary structure, homodimer. The cofactor is Mg(2+).

It carries out the reaction orotidine 5'-phosphate + diphosphate = orotate + 5-phospho-alpha-D-ribose 1-diphosphate. The protein operates within pyrimidine metabolism; UMP biosynthesis via de novo pathway; UMP from orotate: step 1/2. Functionally, catalyzes the transfer of a ribosyl phosphate group from 5-phosphoribose 1-diphosphate to orotate, leading to the formation of orotidine monophosphate (OMP). The chain is Orotate phosphoribosyltransferase from Methanoculleus marisnigri (strain ATCC 35101 / DSM 1498 / JR1).